Here is a 403-residue protein sequence, read N- to C-terminus: CCA-adding enzyme (403 aa).

Residues glycine 32 and arginine 35 each contribute to the ATP site. CTP is bound by residues glycine 32 and arginine 35. Residues aspartate 45 and aspartate 47 each contribute to the Mg(2+) site. ATP-binding residues include arginine 116, aspartate 159, arginine 162, arginine 165, and arginine 168. Positions 116, 159, 162, 165, and 168 each coordinate CTP.

The protein belongs to the tRNA nucleotidyltransferase/poly(A) polymerase family. Bacterial CCA-adding enzyme type 3 subfamily. As to quaternary structure, homodimer. The cofactor is Mg(2+).

The enzyme catalyses a tRNA precursor + 2 CTP + ATP = a tRNA with a 3' CCA end + 3 diphosphate. It catalyses the reaction a tRNA with a 3' CCA end + 2 CTP + ATP = a tRNA with a 3' CCACCA end + 3 diphosphate. Its function is as follows. Catalyzes the addition and repair of the essential 3'-terminal CCA sequence in tRNAs without using a nucleic acid template. Adds these three nucleotides in the order of C, C, and A to the tRNA nucleotide-73, using CTP and ATP as substrates and producing inorganic pyrophosphate. tRNA 3'-terminal CCA addition is required both for tRNA processing and repair. Also involved in tRNA surveillance by mediating tandem CCA addition to generate a CCACCA at the 3' terminus of unstable tRNAs. While stable tRNAs receive only 3'-terminal CCA, unstable tRNAs are marked with CCACCA and rapidly degraded. This is CCA-adding enzyme from Streptococcus uberis (strain ATCC BAA-854 / 0140J).